A 231-amino-acid polypeptide reads, in one-letter code: Ribose-5-phosphate isomerase A (231 aa).

Substrate-binding positions include 31 to 34 (SGST), 87 to 90 (DGAD), and 100 to 103 (KGGG). The Proton acceptor role is filled by glutamate 109. Lysine 127 is a binding site for substrate.

Belongs to the ribose 5-phosphate isomerase family. In terms of assembly, homodimer.

The catalysed reaction is aldehydo-D-ribose 5-phosphate = D-ribulose 5-phosphate. It participates in carbohydrate degradation; pentose phosphate pathway; D-ribose 5-phosphate from D-ribulose 5-phosphate (non-oxidative stage): step 1/1. Functionally, catalyzes the reversible conversion of ribose-5-phosphate to ribulose 5-phosphate. The sequence is that of Ribose-5-phosphate isomerase A from Chlamydia pneumoniae (Chlamydophila pneumoniae).